The primary structure comprises 109 residues: Red pigment-concentrating prohormone (109 aa).

Residues 1–25 (MVRRSGVTLLVVALLVVTLMSSVSA) form the signal peptide. Glutamine 26 carries the pyrrolidone carboxylic acid modification. Tryptophan 33 carries the post-translational modification Tryptophan amide. Positions 34–78 (GKRAAGASGSNGGVGEAVSGLHPSVGGAPGGVVPPGSSSPGDSCG) are disordered. 2 stretches are compositionally biased toward low complexity: residues 49–59 (EAVSGLHPSVG) and 67–78 (PPGSSSPGDSCG).

Belongs to the AKH/HRTH/RPCH family.

It is found in the secreted. Its function is as follows. This hormone adapts the animal to light backgrounds by stimulating concentration of the pigment of its red body-chromatophores. This Callinectes sapidus (Blue crab) protein is Red pigment-concentrating prohormone.